Here is a 274-residue protein sequence, read N- to C-terminus: Histone H1.1 (274 aa).

Disordered stretches follow at residues 1 to 63 and 129 to 155; these read MSEV…SSHP and PSAS…PATV. Ser2 carries the post-translational modification N-acetylserine. Over residues 16–25 the composition is skewed to low complexity; the sequence is TAADAPVTDA. Over residues 40–49 the composition is skewed to basic and acidic residues; sequence NVKEVKEKKT. The H15 domain maps to 61–130; sequence SHPTYEEMIK…KVKASFKLPS (70 aa). The span at 129–145 shows a compositional bias: low complexity; the sequence is PSASAKASSPKAAAEKS. Lys161 participates in a covalent cross-link: Glycyl lysine isopeptide (Lys-Gly) (interchain with G-Cter in ubiquitin). 2 disordered regions span residues 167 to 233 and 249 to 274; these read ASKA…PAKK and KTPV…RVKK. Low complexity-rich tracts occupy residues 175–185 and 221–233; these read AVKPKTAAAKK and AAKT…PAKK.

It belongs to the histone H1/H5 family.

It localises to the nucleus. It is found in the chromosome. Its function is as follows. Histones H1 are necessary for the condensation of nucleosome chains into higher-order structures. The polypeptide is Histone H1.1 (Arabidopsis thaliana (Mouse-ear cress)).